Here is a 245-residue protein sequence, read N- to C-terminus: Serine/arginine-rich splicing factor 1B (245 aa).

The 76-residue stretch at 15 to 90 folds into the RRM 1 domain; that stretch reads CRIYVGNLPP…YRLRVEFPRS (76 aa). Disordered stretches follow at residues 89–116 and 192–245; these read RSGRGGGRGGGGGGGVGAPRGRYGPPSR and KVDG…RSRT. Residues 91–106 are compositionally biased toward gly residues; that stretch reads GRGGGRGGGGGGGVGA. The RRM 2 domain maps to 120–194; sequence YRVIVSGLPP…ETAYIRVKVD (75 aa). Residues 204–245 are compositionally biased toward basic residues; sequence SRSRSRSRSRSRSNSRSRSYSPRRSRGSPRYSPRHSRSRSRT.

This sequence belongs to the splicing factor SR family.

Its subcellular location is the cytoplasm. It localises to the nucleus speckle. Its function is as follows. May play a role in preventing exon skipping, ensuring the accuracy of splicing and regulating alternative splicing. The polypeptide is Serine/arginine-rich splicing factor 1B (srsf1b) (Danio rerio (Zebrafish)).